We begin with the raw amino-acid sequence, 593 residues long: ATP-dependent lipid A-core flippase (593 aa).

The next 6 helical transmembrane spans lie at 33-55 (YIFLSADASMIYLINPILNYGFG), 67-87 (ILMLMGVGMVGFIALRSVGSF), 146-166 (AIITVVQDGTFVIGLIVVMFV), 169-189 (WQLSLFLIVVGPFLGLFISII), 258-278 (VIQIIASLVLAFSLFTIAIFG), and 284-304 (GSSWLTAGSFASFFAAAAAIL). An ABC transmembrane type-1 domain is found at 38-319 (ADASMIYLIN…LTKVNVVIQK (282 aa)). An ABC transporter domain is found at 351-585 (VTIKDLSFAF…GGLYTGSINR (235 aa)). 383–390 (GKSGSGKT) serves as a coordination point for ATP.

The protein belongs to the ABC transporter superfamily. Lipid exporter (TC 3.A.1.106) family. As to quaternary structure, homodimer.

It is found in the cell membrane. The catalysed reaction is ATP + H2O + lipid A-core oligosaccharideSide 1 = ADP + phosphate + lipid A-core oligosaccharideSide 2.. Involved in lipopolysaccharide (LPS) biosynthesis. Translocates lipid A-core from the inner to the outer leaflet of the inner membrane. Transmembrane domains (TMD) form a pore in the inner membrane and the ATP-binding domain (NBD) is responsible for energy generation. The protein is ATP-dependent lipid A-core flippase of Francisella novicida.